Reading from the N-terminus, the 384-residue chain is Alkanesulfonate monooxygenase (384 aa).

Belongs to the SsuD family.

The enzyme catalyses an alkanesulfonate + FMNH2 + O2 = an aldehyde + FMN + sulfite + H2O + 2 H(+). Functionally, catalyzes the desulfonation of aliphatic sulfonates. The chain is Alkanesulfonate monooxygenase from Burkholderia thailandensis (strain ATCC 700388 / DSM 13276 / CCUG 48851 / CIP 106301 / E264).